Reading from the N-terminus, the 687-residue chain is Auxin response factor 14 (687 aa).

Positions 133–235 form a DNA-binding region, TF-B3; it reads FCKTLTASDT…QLRLGVRRAV (103 aa).

This sequence belongs to the ARF family. As to quaternary structure, homo and heterodimers. In terms of tissue distribution, expressed in roots, culms, leaves and young panicles.

Its subcellular location is the nucleus. In terms of biological role, auxin response factors (ARFs) are transcriptional factors that bind specifically to the DNA sequence 5'-TGTCTC-3' found in the auxin-responsive promoter elements (AuxREs). The protein is Auxin response factor 14 (ARF14) of Oryza sativa subsp. japonica (Rice).